Here is a 579-residue protein sequence, read N- to C-terminus: Transcription factor COE2 (579 aa).

An interaction with DNA region spans residues 63–66 (RKSN). A C5-type zinc finger spans residues 149–168 (CRVLLTHEVMCSRCCEKKSC). Interaction with DNA stretches follow at residues 195–202 (NCLKTAGN) and 234–237 (NNSK). The region spanning 260–343 (PCIKAISPSE…KGAPGRFIYT (84 aa)) is the IPT/TIG domain. Disordered regions lie at residues 442–482 (GVSI…YGSN), 514–533 (AIMPSSPPGSSSSSSLLPFS), and 549–579 (LRPQGFPHHPSAKTSGGTSFRAMTGLVVPPM). Polar residues predominate over residues 449 to 459 (GQTSGQGYTRN). Low complexity-rich tracts occupy residues 460–472 (SSSLSPRGYPSSS) and 521–533 (PGSSSSSSLLPFS).

Belongs to the COE family.

It is found in the nucleus. The polypeptide is Transcription factor COE2 (coe2) (Danio rerio (Zebrafish)).